The primary structure comprises 293 residues: MSNYWLNIYKPGGISSAKLVSMVKQILGKKVKVGHAGTLDVEAEGILPIAVGEATKLIQLLIDSRKTYIFTIKFGLQTDSGDYTGTVIATKNYIPSQEEAYTVCSKFIGKVTQIPPAFSALKVNGVRAYKFAREGKEVELKPRNITIYNLKCLNFDKKNAIAIYYTECSKGTYIRTLAEDLALSLQSLGFVIELRRTQVGIFKAENAIRIKSPDEITKSFLEEKSIKIEAILDDILVLDATDSQAQQIKYGQKCIFDYEDDISLLWVRYKGTLLAIGSLNKNCFNSLRVFNVL.

The Nucleophile role is filled by Asp40.

This sequence belongs to the pseudouridine synthase TruB family. Type 1 subfamily.

The enzyme catalyses uridine(55) in tRNA = pseudouridine(55) in tRNA. Functionally, responsible for synthesis of pseudouridine from uracil-55 in the psi GC loop of transfer RNAs. This is tRNA pseudouridine synthase B from Rickettsia akari (strain Hartford).